The chain runs to 418 residues: E3 ubiquitin-protein ligase pellino homolog 1 (418 aa).

Positions 13-200 (APVKYGELIV…MHPRNGFTED (188 aa)) constitute an FHA; atypical domain. Ser-121 carries the post-translational modification Phosphoserine. Thr-127 is subject to Phosphothreonine. The ring-like domain; necessary for ubiquitination of RIPK3 stretch occupies residues 311 to 399 (CGHVHGYHNW…TFHAACPFCA (89 aa)).

This sequence belongs to the pellino family. As to quaternary structure, interacts with MAP3K7. Upon IL1B treatment, forms a complex with TRAF6, IRAK1, IRAK4 and MYD88; this complex recruits MAP3K7/TAK1, TAB1 and TAB2 to mediate NF-kappa-B activation. Direct binding of SMAD6 to PELI1 prevents the complex formation and hence negatively regulates IL1R-TLR signaling and eventually NF-kappa-B-mediated gene expression. Interacts (via atypical FHA domain) with RIPK3. Binds preferentially to the 'Thr-182' phosphorylated form of RIPK3. Interacts with RIPK1. Post-translationally, phosphorylation by IRAK1 and IRAK4 enhances its E3 ligase activity. Phosphorylated by ATM in response to DNA damage, promoting localization to DNA double-strand breaks (DSBs) and ability to mediate 'Lys-63'-linked ubiquitination of NBN. Sumoylated.

The protein localises to the chromosome. The enzyme catalyses S-ubiquitinyl-[E2 ubiquitin-conjugating enzyme]-L-cysteine + [acceptor protein]-L-lysine = [E2 ubiquitin-conjugating enzyme]-L-cysteine + N(6)-ubiquitinyl-[acceptor protein]-L-lysine.. It participates in protein modification; protein ubiquitination. E3 ubiquitin ligase catalyzing the covalent attachment of ubiquitin moieties onto substrate proteins. Involved in the TLR and IL-1 signaling pathways via interaction with the complex containing IRAK kinases and TRAF6. Acts as a positive regulator of inflammatory response in microglia through activation of NF-kappa-B and MAP kinase. Mediates 'Lys-63'-linked polyubiquitination of IRAK1 allowing subsequent NF-kappa-B activation. Conjugates 'Lys-63'-linked ubiquitin chains to the adapter protein ASC/PYCARD, which in turn is crucial for NLRP3 inflammasome activation. Mediates 'Lys-48'-linked polyubiquitination of RIPK3 leading to its subsequent proteasome-dependent degradation; preferentially recognizes and mediates the degradation of the 'Thr-182' phosphorylated form of RIPK3. Negatively regulates necroptosis by reducing RIPK3 expression. Mediates 'Lys-63'-linked ubiquitination of RIPK1. Following phosphorylation by ATM, catalyzes 'Lys-63'-linked ubiquitination of NBN, promoting DNA repair via homologous recombination. Negatively regulates activation of the metabolic mTORC1 signaling pathway by mediating 'Lys-63'-linked ubiquitination of mTORC1-inhibitory protein TSC1 and thereby promoting TSC1/TSC2 complex stability. This chain is E3 ubiquitin-protein ligase pellino homolog 1 (Peli1), found in Mus musculus (Mouse).